Here is a 332-residue protein sequence, read N- to C-terminus: Beta-ketoacyl-[acyl-carrier-protein] synthase III (332 aa).

Catalysis depends on residues Cys-112 and His-252. The interval Gln-253 to Arg-257 is ACP-binding. Asn-282 is a catalytic residue.

This sequence belongs to the thiolase-like superfamily. FabH family. In terms of assembly, homodimer.

The protein resides in the cytoplasm. It carries out the reaction malonyl-[ACP] + acetyl-CoA + H(+) = 3-oxobutanoyl-[ACP] + CO2 + CoA. The protein operates within lipid metabolism; fatty acid biosynthesis. In terms of biological role, catalyzes the condensation reaction of fatty acid synthesis by the addition to an acyl acceptor of two carbons from malonyl-ACP. Catalyzes the first condensation reaction which initiates fatty acid synthesis and may therefore play a role in governing the total rate of fatty acid production. Possesses both acetoacetyl-ACP synthase and acetyl transacylase activities. Its substrate specificity determines the biosynthesis of branched-chain and/or straight-chain of fatty acids. This is Beta-ketoacyl-[acyl-carrier-protein] synthase III from Syntrophomonas wolfei subsp. wolfei (strain DSM 2245B / Goettingen).